The following is a 229-amino-acid chain: uncharacterized protein (229 aa).

Positions 2-229 (LTLNNISKSY…LDERGDISHA (228 aa)) constitute an ABC transporter domain. 38–45 (GPSGSGKS) is a binding site for ATP.

It belongs to the ABC transporter superfamily.

This is an uncharacterized protein from Bacillus subtilis (strain 168).